The chain runs to 845 residues: Translation initiation factor IF-2 (845 aa).

Disordered stretches follow at residues 45-91 and 127-209; these read RRKI…SNLS and EESL…TPKV. Positions 81–91 are enriched in polar residues; sequence SESSMAKSNLS. Residues 137 to 149 show a composition bias toward basic and acidic residues; the sequence is TEIHQEEQKEEKN. Residues 151–162 show a composition bias toward polar residues; it reads PVQTSPLSSAHS. Residues 179–193 are compositionally biased toward basic and acidic residues; that stretch reads TEKRKADEIKNDDRH. The region spanning 343–512 is the tr-type G domain; the sequence is PRPPVVTIMG…LLQAELLDLK (170 aa). A G1 region spans residues 352 to 359; that stretch reads GHVDHGKT. 352-359 contacts GTP; sequence GHVDHGKT. Residues 377 to 381 are G2; that stretch reads GITQH. Residues 398-401 form a G3 region; sequence DTPG. GTP-binding positions include 398–402 and 452–455; these read DTPGH and NKID. Positions 452–455 are G4; it reads NKID. Residues 488–490 are G5; that stretch reads SAK.

This sequence belongs to the TRAFAC class translation factor GTPase superfamily. Classic translation factor GTPase family. IF-2 subfamily.

It localises to the cytoplasm. Its function is as follows. One of the essential components for the initiation of protein synthesis. Protects formylmethionyl-tRNA from spontaneous hydrolysis and promotes its binding to the 30S ribosomal subunits. Also involved in the hydrolysis of GTP during the formation of the 70S ribosomal complex. The sequence is that of Translation initiation factor IF-2 from Bartonella quintana (strain Toulouse) (Rochalimaea quintana).